Reading from the N-terminus, the 399-residue chain is Putative 3'-5' exonuclease R431 (399 aa).

Residues 118-297 enclose the 3'-5' exonuclease domain; that stretch reads FQIVDNWIEN…IYNELQLMTN (180 aa). Residues 335 to 399 enclose the R3H domain; it reads ERRLKSIESK…NKYVIITRHC (65 aa).

This Acanthamoeba polyphaga (Amoeba) protein is Putative 3'-5' exonuclease R431.